A 418-amino-acid polypeptide reads, in one-letter code: Mitochondrial outer membrane protein SLC25A46 (418 aa).

2 positions are modified to phosphoserine: Ser32 and Ser35. Thr45 is modified (phosphothreonine). Positions 46–96 (PPDIPGSRNLHWGEKSPSYGVPSAPPTLEGPAEEPFPGGGDGPRPGRSSEQ) are disordered. Residues 96–187 (QLNRFAGFGI…GIISEFTPLP (92 aa)) form a Solcar 1 repeat. The next 6 helical transmembrane spans lie at 103-123 (FGIGLASLFTENVLAHPCIVL), 167-187 (FIVQGVTLGAEGIISEFTPLP), 202-222 (HLLLKCLTYMVAMPFYSASLI), 258-278 (LLPLFSLIFPTVLHGVLHYII), 314-334 (FPELIANFAASLCSDVILYPL), and 382-402 (VFGFYKGFGAVIIQYTLHATI). A Solcar 2 repeat occupies 311 to 416 (DAYFPELIAN…KIIYSTLLQN (106 aa)).

It belongs to the mitochondrial carrier (TC 2.A.29) family. As to quaternary structure, associates with the mitochondrial contact site and cristae organizing system (MICOS) complex. May associate with the endoplasmic reticulum membrane protein complex (EMC). Widely expressed. Highly expressed in hindbrain, spinal cord and brain coronal sections containing corpus callosum, fornix, optic chiasm, thalamus, hypothalamus, midbrain, pons and cerebellum.

The protein localises to the mitochondrion outer membrane. In terms of biological role, transmembrane protein of the mitochondrial outer membrane that controls mitochondrial organization. May regulate the assembly of the MICOS (mitochondrial contact site and cristae organizing system) complex which is essential to the biogenesis and dynamics of mitochondrial cristae, the inwards folds of the inner mitochondrial membrane. Through its interaction with the EMC (endoplasmic reticulum membrane protein complex), could regulate mitochondrial lipid homeostasis and thereby mitochondrial fission. The chain is Mitochondrial outer membrane protein SLC25A46 from Rattus norvegicus (Rat).